A 311-amino-acid polypeptide reads, in one-letter code: Oxygen-dependent coproporphyrinogen-III oxidase (311 aa).

S100 serves as a coordination point for substrate. A divalent metal cation is bound by residues H104 and H114. The active-site Proton donor is H114. 116-118 (NVR) is a binding site for substrate. H153 and H183 together coordinate a divalent metal cation. Residues 248–283 (YAEFNLVYDRGTLFGLQSGGRTESILMSLPPIVHWE) are important for dimerization. A substrate-binding site is contributed by 266 to 268 (GGR).

This sequence belongs to the aerobic coproporphyrinogen-III oxidase family. Homodimer. It depends on a divalent metal cation as a cofactor.

It localises to the cytoplasm. It catalyses the reaction coproporphyrinogen III + O2 + 2 H(+) = protoporphyrinogen IX + 2 CO2 + 2 H2O. It functions in the pathway porphyrin-containing compound metabolism; protoporphyrin-IX biosynthesis; protoporphyrinogen-IX from coproporphyrinogen-III (O2 route): step 1/1. Functionally, involved in the heme biosynthesis. Catalyzes the aerobic oxidative decarboxylation of propionate groups of rings A and B of coproporphyrinogen-III to yield the vinyl groups in protoporphyrinogen-IX. The protein is Oxygen-dependent coproporphyrinogen-III oxidase of Legionella pneumophila (strain Corby).